We begin with the raw amino-acid sequence, 159 residues long: Nudix hydrolase DR_1025 (159 aa).

Positions 1, 14, and 49 each coordinate Mg(2+). ATP is bound at residue M1–R6. One can recognise a Nudix hydrolase domain in the interval V11–F144. Residue G50–A51 participates in ATP binding. A Nudix box motif is present at residues G50–G71. Positions 53 and 65 each coordinate Mg(2+). F87–D89 provides a ligand contact to ATP. Residue R95 participates in Mg(2+) binding.

The protein belongs to the Nudix hydrolase family. Homodimer. The cofactor is Mg(2+).

It catalyses the reaction 8-oxo-dGTP + H2O = 8-oxo-dGDP + phosphate + H(+). It carries out the reaction 8-oxo-GTP + H2O = 8-oxo-GDP + phosphate + H(+). The catalysed reaction is P(1),P(4)-bis(5'-adenosyl) tetraphosphate + H2O = AMP + ATP + 2 H(+). In terms of biological role, hydrolase that can act as a nucleoside triphosphatase and a dinucleoside polyphosphate pyrophosphatase. The best substrates are 8-oxo-dGTP and 8-oxo-GTP. Other substrates include Ap4A, dGTP and GTP. May be involved in protection from damage caused by radiation. The chain is Nudix hydrolase DR_1025 from Deinococcus radiodurans (strain ATCC 13939 / DSM 20539 / JCM 16871 / CCUG 27074 / LMG 4051 / NBRC 15346 / NCIMB 9279 / VKM B-1422 / R1).